The following is a 474-amino-acid chain: Aspartyl/glutamyl-tRNA(Asn/Gln) amidotransferase subunit B (474 aa).

This sequence belongs to the GatB/GatE family. GatB subfamily. In terms of assembly, heterotrimer of A, B and C subunits.

The enzyme catalyses L-glutamyl-tRNA(Gln) + L-glutamine + ATP + H2O = L-glutaminyl-tRNA(Gln) + L-glutamate + ADP + phosphate + H(+). It catalyses the reaction L-aspartyl-tRNA(Asn) + L-glutamine + ATP + H2O = L-asparaginyl-tRNA(Asn) + L-glutamate + ADP + phosphate + 2 H(+). Allows the formation of correctly charged Asn-tRNA(Asn) or Gln-tRNA(Gln) through the transamidation of misacylated Asp-tRNA(Asn) or Glu-tRNA(Gln) in organisms which lack either or both of asparaginyl-tRNA or glutaminyl-tRNA synthetases. The reaction takes place in the presence of glutamine and ATP through an activated phospho-Asp-tRNA(Asn) or phospho-Glu-tRNA(Gln). In Wolbachia pipientis wMel, this protein is Aspartyl/glutamyl-tRNA(Asn/Gln) amidotransferase subunit B.